We begin with the raw amino-acid sequence, 274 residues long: Pyrroline-5-carboxylate reductase 3 (274 aa).

An N-acetylalanine modification is found at A2.

Belongs to the pyrroline-5-carboxylate reductase family. In terms of assembly, homodecamer; composed of 5 homodimers.

The protein resides in the cytoplasm. The enzyme catalyses L-proline + NADP(+) = (S)-1-pyrroline-5-carboxylate + NADPH + 2 H(+). It carries out the reaction L-proline + NAD(+) = (S)-1-pyrroline-5-carboxylate + NADH + 2 H(+). The protein operates within amino-acid biosynthesis; L-proline biosynthesis; L-proline from L-glutamate 5-semialdehyde: step 1/1. In terms of biological role, oxidoreductase that catalyzes the last step in proline biosynthesis, which corresponds to the reduction of pyrroline-5-carboxylate (P5C) to L-proline using NAD(P)H. Proline is synthesized from either glutamate or ornithine; both are converted to P5C, and then to proline via pyrroline-5-carboxylate reductases (PYCRs). PYCR3 is exclusively linked to the biosynthesis of proline from ornithine. The polypeptide is Pyrroline-5-carboxylate reductase 3 (Rattus norvegicus (Rat)).